The following is a 386-amino-acid chain: DNA dC-&gt;dU-editing enzyme APOBEC-3D (386 aa).

2 CMP/dCMP-type deaminase domains span residues 29 to 145 (GRSY…DWRW) and 187 to 334 (DDNY…LCSL). Residues histidine 78, cysteine 109, cysteine 112, and histidine 262 each coordinate Zn(2+). Glutamate 264 functions as the Proton donor in the catalytic mechanism. 2 residues coordinate Zn(2+): cysteine 293 and cysteine 296.

The protein belongs to the cytidine and deoxycytidylate deaminase family. Can form homo- and heterodimers with APOBEC3F and APOBEC3G. Interacts with L1RE1; this interaction inhibits LINE-1 retrotransposition. In terms of assembly, (Microbial infection) Interacts with HIV-1 Vif. This interaction triggers APOBEC3D polyubiquitylation and degradation by the 26S proteasome. The cofactor is Zn(2+). Expressed in lymphoid organs. Also detected in non-lymphoid tissues including lung.

The protein localises to the cytoplasm. It localises to the P-body. The enzyme catalyses a 2'-deoxycytidine in single-stranded DNA + H2O + H(+) = a 2'-deoxyuridine in single-stranded DNA + NH4(+). (Microbial infection) Antiviral activity is neutralized by the HIV-1 virion infectivity factor (Vif), that prevents its incorporation into progeny virions by both inhibiting its translation and/or by inducing its ubiquitination and subsequent degradation by the 26S proteasome. In terms of biological role, DNA deaminase (cytidine deaminase) which acts as an inhibitor of retrovirus replication and retrotransposon mobility via deaminase-dependent and -independent mechanisms. Exhibits antiviral activity against HIV-1. After the penetration of retroviral nucleocapsids into target cells of infection and the initiation of reverse transcription, it can induce the conversion of cytosine to uracil in the minus-sense single-strand viral DNA, leading to G-to-A hypermutations in the subsequent plus-strand viral DNA. The resultant detrimental levels of mutations in the proviral genome, along with a deamination-independent mechanism that works prior to the proviral integration, together exert efficient antiretroviral effects in infected target cells. Selectively targets single-stranded DNA and does not deaminate double-stranded DNA or single- or double-stranded RNA. Also inhibits the mobility of LTR and non-LTR retrotransposons. Its function is as follows. (Microbial infection) Enhances hepatitis B virus/HBV replication by excluding restriction factors APOBEC3F and APOBEC3G from HBV capsids. The polypeptide is DNA dC-&gt;dU-editing enzyme APOBEC-3D (Homo sapiens (Human)).